A 216-amino-acid chain; its full sequence is Cyclo(L-leucyl-L-leucyl) synthase (216 aa).

The active-site Nucleophile is the serine 14. Substrate is bound by residues asparagine 17, 155–159 (YIFDE), and tyrosine 179.

Belongs to the CDPS family.

The enzyme catalyses 2 L-leucyl-tRNA(Leu) = cyclo(L-leucyl-L-leucyl) + 2 tRNA(Leu) + 2 H(+). In terms of biological role, it uses activated amino acids in the form of aminoacyl-tRNAs (aa-tRNAs) as substrates to catalyze the ATP-independent formation of cyclodipeptides which are intermediates in diketopiperazine (DKP) biosynthetic pathways. Catalyzes the formation of cyclo(L-Leu-L-Leu) (cLL) from L-leucyl-tRNA(Leu). Can incorporate various nonpolar residues, such as L-leucine and L-methionine, into cyclodipeptides. In Corynebacterium jeikeium (strain K411), this protein is Cyclo(L-leucyl-L-leucyl) synthase.